Reading from the N-terminus, the 283-residue chain is Protein FdhE homolog (283 aa).

Belongs to the FdhE family.

The protein localises to the cytoplasm. Functionally, necessary for formate dehydrogenase activity. This chain is Protein FdhE homolog, found in Aquifex aeolicus (strain VF5).